The following is a 571-amino-acid chain: Proline--tRNA ligase (571 aa).

The protein belongs to the class-II aminoacyl-tRNA synthetase family. ProS type 1 subfamily. As to quaternary structure, homodimer.

Its subcellular location is the cytoplasm. It catalyses the reaction tRNA(Pro) + L-proline + ATP = L-prolyl-tRNA(Pro) + AMP + diphosphate. In terms of biological role, catalyzes the attachment of proline to tRNA(Pro) in a two-step reaction: proline is first activated by ATP to form Pro-AMP and then transferred to the acceptor end of tRNA(Pro). As ProRS can inadvertently accommodate and process non-cognate amino acids such as alanine and cysteine, to avoid such errors it has two additional distinct editing activities against alanine. One activity is designated as 'pretransfer' editing and involves the tRNA(Pro)-independent hydrolysis of activated Ala-AMP. The other activity is designated 'posttransfer' editing and involves deacylation of mischarged Ala-tRNA(Pro). The misacylated Cys-tRNA(Pro) is not edited by ProRS. The polypeptide is Proline--tRNA ligase (Histophilus somni (strain 129Pt) (Haemophilus somnus)).